The following is a 2507-amino-acid chain: Putative neurobeachin homolog (2507 aa).

Disordered regions lie at residues 1-109, 1307-1377, and 1629-1649; these read MEIS…PPLP, PSSP…DGGR, and SRHEEANLPEGEKNEEPEISE. Residues 24–37 show a composition bias toward acidic residues; that stretch reads PVEEGEEVNDEESN. The span at 1317–1340 shows a compositional bias: polar residues; that stretch reads TTQKQENSENVNSETSPENGSNGK. Acidic residues predominate over residues 1360 to 1372; it reads DGEEEENGEEGQG. A BEACH-type PH domain is found at 1690–1798; it reads PSSQSACFST…AVKKVVYQLP (109 aa). A BEACH domain is found at 1817–2106; the sequence is MTPRQLFKHS…QLLTEAHPPR (290 aa). WD repeat units lie at residues 2265-2308, 2326-2365, 2405-2444, and 2447-2486; these read GHGD…GFIA, GHEASISALCVSAEHGLVVSGCEDGVILIHTTSSDLLRRI, LVDDKIECVTVTRDGEFAVTGAVNGRINIWRMFPLTKLYT, and PLNSAVRSVAVVASHRFILGGLDSGAIVVFNADFNRWHYE.

Belongs to the WD repeat neurobeachin family. In terms of assembly, interacts with RII subunit of PKA. Expressed in vulval precursor cells and rectal epithelia in L2 and L3 larvae. In L4 larvae, expression is seen in intestinal epithelial cells.

It localises to the cytoplasm. Its subcellular location is the membrane. It is found in the nucleus. Binds to type II regulatory subunits of protein kinase A and anchors/targets them to the membrane. May anchor the kinase to cytoskeletal and/or organelle-associated proteins. Regulates endosomal traffic in polarized epithelial cells such as the vulval precursor cells and intestinal cells. Thought to act as a negative regulator of lin-12 activity in vulval precursor cells. May have a role in the internalization process from basolateral surface of polarized epithelial cells. This is Putative neurobeachin homolog (sel-2) from Caenorhabditis elegans.